A 536-amino-acid chain; its full sequence is Membrane protein insertase YidC (536 aa).

A run of 5 helical transmembrane segments spans residues 7 to 27 (FFIF…QSQS), 338 to 358 (LLST…LITF), 419 to 439 (LPVF…IGSV), 453 to 473 (LSDQ…MFFI), and 494 to 514 (PFIF…YYIV).

This sequence belongs to the OXA1/ALB3/YidC family. Type 1 subfamily. In terms of assembly, interacts with the Sec translocase complex via SecD. Specifically interacts with transmembrane segments of nascent integral membrane proteins during membrane integration.

Its subcellular location is the cell membrane. Required for the insertion and/or proper folding and/or complex formation of integral membrane proteins into the membrane. Involved in integration of membrane proteins that insert both dependently and independently of the Sec translocase complex, as well as at least some lipoproteins. Aids folding of multispanning membrane proteins. This Buchnera aphidicola subsp. Schizaphis graminum (strain Sg) protein is Membrane protein insertase YidC.